A 577-amino-acid polypeptide reads, in one-letter code: Arginine--tRNA ligase (577 aa).

Residues 122 to 132 (PNVAKEMHVGH) carry the 'HIGH' region motif.

The protein belongs to the class-I aminoacyl-tRNA synthetase family. In terms of assembly, monomer.

The protein resides in the cytoplasm. The catalysed reaction is tRNA(Arg) + L-arginine + ATP = L-arginyl-tRNA(Arg) + AMP + diphosphate. The sequence is that of Arginine--tRNA ligase from Escherichia coli (strain ATCC 8739 / DSM 1576 / NBRC 3972 / NCIMB 8545 / WDCM 00012 / Crooks).